A 740-amino-acid chain; its full sequence is Probable type IV piliation system protein DR_0774 (740 aa).

The N-terminal stretch at 1–20 is a signal peptide; it reads MNKRHALLLTAVLGMATAYA.

Belongs to the bacterial secretin family.

It localises to the cell envelope. Could be part of the type IV piliation system (T4P). May contribute at the cohesion between the S-layer and the outer membrane by forming oligomers. Could also be the main channel through which trafficking is managed. In Deinococcus radiodurans (strain ATCC 13939 / DSM 20539 / JCM 16871 / CCUG 27074 / LMG 4051 / NBRC 15346 / NCIMB 9279 / VKM B-1422 / R1), this protein is Probable type IV piliation system protein DR_0774.